We begin with the raw amino-acid sequence, 41 residues long: Augerpeptide hhe6.1 (41 aa).

3 disulfides stabilise this stretch: C11-C32, C18-C35, and C31-C40.

In terms of tissue distribution, expressed by the venom duct.

Its subcellular location is the secreted. The protein is Augerpeptide hhe6.1 of Hastula hectica (Sea snail).